Consider the following 392-residue polypeptide: DNA replication and repair protein RecF (392 aa).

Residue 30–37 (GRNGFGKT) coordinates ATP.

It belongs to the RecF family.

It is found in the cytoplasm. In terms of biological role, the RecF protein is involved in DNA metabolism; it is required for DNA replication and normal SOS inducibility. RecF binds preferentially to single-stranded, linear DNA. It also seems to bind ATP. This Corynebacterium aurimucosum (strain ATCC 700975 / DSM 44827 / CIP 107346 / CN-1) (Corynebacterium nigricans) protein is DNA replication and repair protein RecF.